Here is a 361-residue protein sequence, read N- to C-terminus: Homocitrate synthase (361 aa).

Residues 1–249 (MILDSTLREG…VKKYRLDKLY (249 aa)) enclose the Pyruvate carboxyltransferase domain. Position 8 (Arg8) interacts with 2-oxoglutarate. Glu9 lines the Mg(2+) pocket. His68, Arg128, and Thr162 together coordinate 2-oxoglutarate. Residues His188 and His190 each contribute to the Mg(2+) site. The active-site Proton acceptor is His282.

The protein belongs to the alpha-IPM synthase/homocitrate synthase family. Homocitrate synthase LYS20/LYS21 subfamily. Mg(2+) serves as cofactor. It depends on Mn(2+) as a cofactor.

The catalysed reaction is acetyl-CoA + 2-oxoglutarate + H2O = (2R)-homocitrate + CoA + H(+). It participates in amino-acid biosynthesis; L-lysine biosynthesis via AAA pathway; L-alpha-aminoadipate from 2-oxoglutarate: step 1/5. Its function is as follows. Catalyzes the aldol-type condensation of 2-oxoglutarate with acetyl-CoA to yield homocitrate. Carries out the first step of the alpha-aminoadipate (AAA) lysine biosynthesis pathway. This Pyrococcus horikoshii (strain ATCC 700860 / DSM 12428 / JCM 9974 / NBRC 100139 / OT-3) protein is Homocitrate synthase.